Reading from the N-terminus, the 309-residue chain is GDP-6-deoxy-D-mannose reductase (309 aa).

NADP(+)-binding positions include 11-12, Arg-32, 47-48, and 71-73; these read FV, DI, and AKS. Substrate is bound at residue 114–115; the sequence is SS. Tyr-140 lines the NADP(+) pocket. Substrate contacts are provided by residues Asn-169, Asp-183, Arg-209, and 269-272; that span reads RPSE.

Belongs to the NAD(P)-dependent epimerase/dehydratase family. GDP-6-deoxy-D-mannose reductase subfamily.

The enzyme catalyses GDP-alpha-D-rhamnose + NAD(+) = GDP-4-dehydro-alpha-D-rhamnose + NADH + H(+). It catalyses the reaction GDP-alpha-D-rhamnose + NADP(+) = GDP-4-dehydro-alpha-D-rhamnose + NADPH + H(+). Functionally, reductase that catalyzes the conversion of GDP-6-deoxy-D-mannose to GDP-4-dehydro-6-deoxy-D-mannose (GDP-D-rhamnose). This chain is GDP-6-deoxy-D-mannose reductase (rmd), found in Aneurinibacillus thermoaerophilus.